The chain runs to 248 residues: 14-3-3-like protein G-BOX factor 14 lambda (248 aa).

3 positions are modified to phosphoserine; by CRPK1: serine 70, serine 112, and serine 193. At threonine 214 the chain carries Phosphothreonine; by CRPK1.

It belongs to the 14-3-3 family. In terms of assembly, interacts with SERK1 in the cell membrane. Component of the SERK1 signaling complex, composed of KAPP, CDC48A, GRF6 or GRF7, SERK1, SERK2, SERK3/BAK1 and BRI1. Interacts with TPK1. Interacts with ADF1. Binds to CRPK1 at the plasma membrane. Interacts with DREB1A and DREB1B in the nucleus when activated by CRPK1-mediated phosphorylation upon freezing. Interacts with CINV1. Binds to the N-terminal region of B1L. Post-translationally, transphosphorylated by SERK1. In terms of processing, phosphorylated by CRPK1 in response to cold.

Its subcellular location is the nucleus. It is found in the cell membrane. The protein localises to the cytoplasm. Its function is as follows. Is associated with a DNA binding complex that binds to the G box, a well-characterized cis-acting DNA regulatory element found in plant genes. Specific negative regulator of slow-vacuolar (SV) ion channel. Mediates F-actin dynamics possibly through inhibiting ADF1 phosphorylation. Negative regulator of freezing tolerance that modulates cold-responsive C-repeat-binding factors (CBF) DREB1A and DREB1B proteins stability by facilitating their ubiquitin-mediated degradation when activated by CRPK1-mediated phosphorylation in freezing conditions; this processus is counteracted by B1L. This chain is 14-3-3-like protein G-BOX factor 14 lambda, found in Arabidopsis thaliana (Mouse-ear cress).